Reading from the N-terminus, the 123-residue chain is Putative hypoxanthine phosphoribosyltransferase (123 aa).

Functionally, may play a role in purine salvage. This chain is Putative hypoxanthine phosphoribosyltransferase, found in Methanosarcina mazei (strain ATCC BAA-159 / DSM 3647 / Goe1 / Go1 / JCM 11833 / OCM 88) (Methanosarcina frisia).